The sequence spans 36 residues: Photosystem I reaction center subunit VIII (36 aa).

A helical membrane pass occupies residues 9-29 (ILTPVVTLVFPGLMFALFFVL).

This sequence belongs to the PsaI family.

Its subcellular location is the plastid. The protein resides in the chloroplast thylakoid membrane. Its function is as follows. May help in the organization of the PsaL subunit. The polypeptide is Photosystem I reaction center subunit VIII (Emiliania huxleyi (Coccolithophore)).